A 233-amino-acid polypeptide reads, in one-letter code: Nuclear speckle RNA-binding protein A (233 aa).

Disordered regions lie at residues 1-54 (MADG…VPDT), 68-92 (VQSG…GGNV), and 214-233 (FLRL…RGRR). The segment covering 71–91 (GEGGSVSMGRSGGGGGGGGGN) has biased composition (gly residues). The 87-residue stretch at 136–222 (NTLYVEGLPS…KFLRLQFSRK (87 aa)) folds into the RRM domain.

In terms of tissue distribution, expressed in root meristems, lateral root primordia and root vascular tissues.

It is found in the nucleus speckle. Functionally, alternative splicing (AS) regulator that binds to specific mRNAs and modulates auxin effects on the transcriptome. Displaced from its targets upon binding to AS competitor long non-coding RNA (ASCO-RNA). The chain is Nuclear speckle RNA-binding protein A from Arabidopsis thaliana (Mouse-ear cress).